A 205-amino-acid polypeptide reads, in one-letter code: High frequency lysogenization protein HflD homolog (205 aa).

Belongs to the HflD family.

It is found in the cytoplasm. The protein resides in the cell inner membrane. The protein is High frequency lysogenization protein HflD homolog of Vibrio atlanticus (strain LGP32) (Vibrio splendidus (strain Mel32)).